A 90-amino-acid chain; its full sequence is Arminin 7722 (90 aa).

An N-terminal signal peptide occupies residues 1–18 (MRSASLILFVAIVALTYA). Positions 19-59 (RSYEDIKEEIRNEVENEILDDLEEENDELDDNAQEVSDPRA) are excised as a propeptide. Thr87 is subject to Threonine amide.

It belongs to the arminin family. In terms of tissue distribution, expressed in entodermal epithelium along the body column.

It localises to the secreted. The protein resides in the target cell membrane. Antimicrobial peptide with a broad-spectrum antimicrobial activity. Keeps its antibacterial activity under a wide range of salt concentrations that mimic physiological conditions of human blood, which is surprising, since Hydra is an obligate freshwater animal with nearly no salt tolerance. Does not affect red blood cells. This Hydra vulgaris (Hydra) protein is Arminin 7722.